The sequence spans 855 residues: ATP-dependent RNA helicase MAK5 (855 aa).

2 disordered regions span residues 1–43 (MVKT…KQKL) and 95–167 (KGEE…FTGF). The segment covering 8-33 (GKKKPQKVVKKQQKTQKKHNQQKLQK) has biased composition (basic residues). Positions 112-150 (ELEDGDDIEVDEGEEIAQQEQENSDNDELIEEDAEEVEE) are enriched in acidic residues. The short motif at 219-247 (EDKIETCLSPYILNGLSNMKFTTPTPIQK) is the Q motif element. Positions 250–449 (IPLALEGKDV…DKQQKQKSVK (200 aa)) constitute a Helicase ATP-binding domain. 263–270 (ATTGSGKT) is a binding site for ATP. The short motif at 386–389 (DEAD) is the DEAD box element. The Helicase C-terminal domain occupies 515 to 668 (YLYYFLLMYK…KINVHSDVKL (154 aa)). Residues 801–855 (DLQKNGSKIKPVKGDDKMKRIAKVNQRKQAKKDAKKDAKQKRQELRHGHSNKSEE) are disordered. Residues 820 to 830 (RIAKVNQRKQA) show a composition bias toward basic residues. A compositionally biased stretch (basic and acidic residues) spans 831–855 (KKDAKKDAKQKRQELRHGHSNKSEE).

It belongs to the DEAD box helicase family. DDX24/MAK5 subfamily.

It localises to the nucleus. The protein resides in the nucleolus. The enzyme catalyses ATP + H2O = ADP + phosphate + H(+). Functionally, ATP-binding RNA helicase involved in the biogenesis of 60S ribosomal subunits and is required for the normal formation of 25S and 5.8S rRNAs. This is ATP-dependent RNA helicase MAK5 (MAK5) from Lodderomyces elongisporus (strain ATCC 11503 / CBS 2605 / JCM 1781 / NBRC 1676 / NRRL YB-4239) (Yeast).